Consider the following 151-residue polypeptide: Ribosome maturation factor RimP (151 aa).

This sequence belongs to the RimP family.

It is found in the cytoplasm. Required for maturation of 30S ribosomal subunits. This chain is Ribosome maturation factor RimP, found in Thermoanaerobacter pseudethanolicus (strain ATCC 33223 / 39E) (Clostridium thermohydrosulfuricum).